A 261-amino-acid polypeptide reads, in one-letter code: uncharacterized protein (261 aa).

A compositionally biased stretch (polar residues) spans 20 to 34 (TMSTPFLESDNSNTQ). A disordered region spans residues 20-55 (TMSTPFLESDNSNTQSISGRIGSNNNSNSKNSGGIG). Residues 35 to 51 (SISGRIGSNNNSNSKNS) are compositionally biased toward low complexity. 3 helical membrane-spanning segments follow: residues 113-133 (LFSG…ILLL), 183-200 (LIFW…ILFF), and 204-226 (IISL…MANV).

Belongs to the TVP23 family.

It localises to the membrane. This is an uncharacterized protein from Dictyostelium discoideum (Social amoeba).